A 206-amino-acid polypeptide reads, in one-letter code: Dephospho-CoA kinase (206 aa).

The region spanning 4–200 (TVALTGGIGS…ASYLKLASQF (197 aa)) is the DPCK domain. 12–17 (GSGKST) contacts ATP.

Belongs to the CoaE family.

It localises to the cytoplasm. The catalysed reaction is 3'-dephospho-CoA + ATP = ADP + CoA + H(+). It functions in the pathway cofactor biosynthesis; coenzyme A biosynthesis; CoA from (R)-pantothenate: step 5/5. In terms of biological role, catalyzes the phosphorylation of the 3'-hydroxyl group of dephosphocoenzyme A to form coenzyme A. The sequence is that of Dephospho-CoA kinase from Salmonella choleraesuis (strain SC-B67).